We begin with the raw amino-acid sequence, 466 residues long: ATP synthase subunit beta, sodium ion specific (466 aa).

ATP is bound at residue Gly153–Thr160.

It belongs to the ATPase alpha/beta chains family. In terms of assembly, F-type ATPases have 2 components, CF(1) - the catalytic core - and CF(0) - the membrane proton channel. CF(1) has five subunits: alpha(3), beta(3), gamma(1), delta(1), epsilon(1). CF(0) has three main subunits: a, b and c.

The protein localises to the cell membrane. It catalyses the reaction 4 Na(+)(in) + ATP + H2O = 4 Na(+)(out) + ADP + phosphate + H(+). With respect to regulation, inhibited by nitrate. In terms of biological role, produces ATP from ADP in the presence of a sodium ion gradient across the membrane. The beta chain is the catalytic subunit. In Acetobacterium woodii (strain ATCC 29683 / DSM 1030 / JCM 2381 / KCTC 1655 / WB1), this protein is ATP synthase subunit beta, sodium ion specific.